Consider the following 1335-residue polypeptide: Bifunctional autolysin (1335 aa).

An N-terminal signal peptide occupies residues 1 to 29; sequence MAKKFNYKLPSMVALTLFGTAFTAHQANA. Disordered stretches follow at residues 51–88, 100–262, and 514–535; these read QAEK…QSTT, NEIS…KYKE, and WGTT…NNKL. 5 stretches are compositionally biased toward polar residues: residues 58-88, 100-127, 143-155, 176-223, and 244-258; these read EVTQ…QSTT, NEIS…VTKN, TDTN…QSVA, TASQ…NASG, and SLNN…TTSY. The N-acetylmuramoyl-L-alanine amidase stretch occupies residues 303-863; it reads VSSQKTSSLP…LSTQSTPAPK (561 aa). Residues 515-531 show a composition bias toward low complexity; sequence GTTSTKPSQPSKPSGGT. GW domains are found at residues 533-610, 612-686, 700-774, 776-850, 868-943, 945-1020, and 1023-1096; these read NKLT…YNTA, APVK…TASK, TVTN…YNTA, SPVK…APSK, STQT…TQNI, KQTQ…QNST, and QSTP…KEKI. The interval 864–1335 is endo-beta-N-acetylglucosaminidase; that stretch reads QVKPSTQTVN…GKYFEIPTYK (472 aa).

The protein in the N-terminal section; belongs to the N-acetylmuramoyl-L-alanine amidase 2 family. In the C-terminal section; belongs to the glycosyl hydrolase 73 family. In terms of assembly, oligomer; forms a ring structure at the cell surface which is important for efficient partitioning of daughter cells after cell division. In terms of processing, undergoes proteolytic processing to generate the two extracellular lytic enzymes, probably at the septal region on the cell surface.

It localises to the secreted. The catalysed reaction is Hydrolyzes the link between N-acetylmuramoyl residues and L-amino acid residues in certain cell-wall glycopeptides.. It catalyses the reaction an N(4)-(oligosaccharide-(1-&gt;3)-[oligosaccharide-(1-&gt;6)]-beta-D-Man-(1-&gt;4)-beta-D-GlcNAc-(1-&gt;4)-alpha-D-GlcNAc)-L-asparaginyl-[protein] + H2O = an oligosaccharide-(1-&gt;3)-[oligosaccharide-(1-&gt;6)]-beta-D-Man-(1-&gt;4)-D-GlcNAc + N(4)-(N-acetyl-beta-D-glucosaminyl)-L-asparaginyl-[protein]. Functionally, endohydrolysis of the di-N-acetylchitobiosyl unit in high-mannose glycopeptides and glycoproteins containing the -[(Man)5(GlcNAc)2]-Asn structure. One N-acetyl-D-glucosamine residue remains attached to the protein; the rest of the oligosaccharide is released intact. Cleaves the peptidoglycan connecting the daughter cells at the end of the cell division cycle, resulting in the separation of the two newly divided cells. Acts as an autolysin in penicillin-induced lysis. As a bacterial surface-associated protein, mediates attachment to polystyrene surfaces, contributing to biofilm formation. Also has vitronectin-binding activity. In Staphylococcus epidermidis, this protein is Bifunctional autolysin (atl).